Reading from the N-terminus, the 644-residue chain is Replication protein E1 (644 aa).

Residues 86-88 carry the Nuclear localization signal motif; it reads KRK. The interval 146-177 is disordered; the sequence is QVESQNGDADLNDSESSGVGASSDVSSETDVD. A compositionally biased stretch (low complexity) spans 159–173; it reads SESSGVGASSDVSSE. Positions 179–345 are DNA-binding region; it reads CNTVPLQNIS…LTVLQHSFND (167 aa). Residues 444-594 enclose the SF3 helicase domain; that stretch reads IEFTAFLVAF…FPFDANGNPV (151 aa). 470–477 contributes to the ATP binding site; sequence GPANTGKS. Residue Lys-551 forms a Glycyl lysine isopeptide (Lys-Gly) (interchain with G-Cter in SUMO) linkage.

Belongs to the papillomaviridae E1 protein family. As to quaternary structure, can form hexamers. Interacts with E2 protein; this interaction increases E1 DNA binding specificity. Interacts with host DNA polymerase subunit POLA2. Interacts with host single stranded DNA-binding protein RPA1. Interacts with host TOP1; this interaction stimulates the enzymatic activity of TOP1. In terms of processing, phosphorylated. Post-translationally, sumoylated.

The protein localises to the host nucleus. It carries out the reaction Couples ATP hydrolysis with the unwinding of duplex DNA by translocating in the 3'-5' direction.. The catalysed reaction is ATP + H2O = ADP + phosphate + H(+). Functionally, ATP-dependent DNA 3'-5' helicase required for initiation of viral DNA replication. It forms a complex with the viral E2 protein. The E1-E2 complex binds to the replication origin which contains binding sites for both proteins. During the initial step, a dimer of E1 interacts with a dimer of protein E2 leading to a complex that binds the viral origin of replication with high specificity. Then, a second dimer of E1 displaces the E2 dimer in an ATP-dependent manner to form the E1 tetramer. Following this, two E1 monomers are added to each half of the site, which results in the formation of two E1 trimers on the viral ori. Subsequently, two hexamers will be created. The double hexamer acts as a bi-directional helicase machinery and unwinds the viral DNA and then recruits the host DNA polymerase to start replication. In Homo sapiens (Human), this protein is Replication protein E1.